The following is a 646-amino-acid chain: Cytochrome b translation regulator cbp8 (646 aa).

Component of a complex, at least composed of cbp7 and cbp8.

Its subcellular location is the mitochondrion. Translation factor for cob1/cytochrome b; plays a role in cob1 mRNA stabilization and required for correct folding of the protein. The chain is Cytochrome b translation regulator cbp8 from Schizosaccharomyces pombe (strain 972 / ATCC 24843) (Fission yeast).